The primary structure comprises 545 residues: Degenerin-like protein asic-2 (545 aa).

Residues 1 to 34 (MRGGGFVQIFKDFSNWSTVAVVPHVANANNKISR) are Cytoplasmic-facing. A helical transmembrane segment spans residues 35–55 (IFWIAIFLFVLGMFAYELYIL). Residues 56–457 (IAKFFSYPAT…NVINDLGGQA (402 aa)) lie on the Extracellular side of the membrane. C83 and C191 are joined by a disulfide. A glycan (N-linked (GlcNAc...) asparagine) is linked at N201. Cystine bridges form between C284-C370, C305-C366, C309-C364, C318-C343, and C320-C334. N350 carries N-linked (GlcNAc...) asparagine glycosylation. A helical membrane pass occupies residues 458-478 (GLWLGLSVISVVEMTGLMLVM). A GAS motif; ion selectivity filter motif is present at residues 462–464 (GLS). Residues 479–545 (GAFCVTGGAI…NKGDEEKKKK (67 aa)) are Cytoplasmic-facing. Basic and acidic residues-rich tracts occupy residues 514-523 (DHLEKKHGEM) and 534-545 (IENKGDEEKKKK). Positions 514 to 545 (DHLEKKHGEMESGSDGEVDDIENKGDEEKKKK) are disordered.

It belongs to the amiloride-sensitive sodium channel (TC 1.A.6) family. As to quaternary structure, can form homotrimers. Heterotrimer; forms functional heterotrimers producing channel with different properties.

The protein resides in the cell membrane. The enzyme catalyses Na(+)(in) = Na(+)(out). Inhibited by the diuretic drug amiloride. Functionally, could form pH-gated heterotrimeric sodium channels that act as postsynaptic excitatory sensors in the nervous system, generating rapid, transient inward currents that fully desensitize upon extracellular acidification. In Caenorhabditis elegans, this protein is Degenerin-like protein asic-2 (asic-2).